The following is a 300-amino-acid chain: Ribosomal protein bS6--L-glutamate ligase (300 aa).

The ATP-grasp domain maps to 104–287 (LQLLARQGID…IAGRMIQWIE (184 aa)). ATP-binding positions include lysine 141, 178–179 (EY), aspartate 187, and 211–213 (RSN). Residues aspartate 248, glutamate 260, and asparagine 262 each coordinate Mg(2+). The Mn(2+) site is built by aspartate 248, glutamate 260, and asparagine 262.

Belongs to the RimK family. Mg(2+) serves as cofactor. It depends on Mn(2+) as a cofactor.

Functionally, an L-glutamate ligase that catalyzes the ATP-dependent post-translational addition of glutamate residues to the C-terminus of ribosomal protein bS6 (RpsF). Is also able to catalyze the synthesis of poly-alpha-glutamate in vitro, via ATP hydrolysis from unprotected glutamate as substrate. The number of glutamate residues added to either RpsF or to poly-alpha-glutamate changes with pH. The protein is Ribosomal protein bS6--L-glutamate ligase of Salmonella agona (strain SL483).